The primary structure comprises 457 residues: Cysteine--tRNA ligase (457 aa).

C27 lines the Zn(2+) pocket. The 'HIGH' region motif lies at 29 to 39 (PTVYDFAHIGN). Zn(2+) contacts are provided by C211, H236, and E240. The 'KMSKS' region motif lies at 269–273 (KMSKS). K272 lines the ATP pocket.

It belongs to the class-I aminoacyl-tRNA synthetase family. In terms of assembly, monomer. Zn(2+) is required as a cofactor.

It localises to the cytoplasm. It carries out the reaction tRNA(Cys) + L-cysteine + ATP = L-cysteinyl-tRNA(Cys) + AMP + diphosphate. This chain is Cysteine--tRNA ligase, found in Ehrlichia ruminantium (strain Welgevonden).